Here is a 504-residue protein sequence, read N- to C-terminus: Maturase K (504 aa).

Belongs to the intron maturase 2 family. MatK subfamily.

It is found in the plastid. The protein localises to the chloroplast. Usually encoded in the trnK tRNA gene intron. Probably assists in splicing its own and other chloroplast group II introns. The chain is Maturase K from Arabidopsis halleri.